A 102-amino-acid polypeptide reads, in one-letter code: Movement protein (102 aa).

A helical membrane pass occupies residues 43-63 (VVALIVILFAVGIVYLAYTLF). Residues 82–102 (IGFGNTPLRRPGEGNPNGGPV) are disordered.

It belongs to the mastrevirus movement protein family. In terms of assembly, interacts with the capsid protein (CP). Part of a MP-CP-viral DNA complex.

The protein resides in the host membrane. Involved in the viral transport within, and between cells. This Tobacco yellow dwarf virus (strain Australia) (TYDV) protein is Movement protein.